Consider the following 315-residue polypeptide: Methionyl-tRNA formyltransferase (315 aa).

A (6S)-5,6,7,8-tetrahydrofolate-binding site is contributed by 115–118; that stretch reads SLLP.

The protein belongs to the Fmt family.

It catalyses the reaction L-methionyl-tRNA(fMet) + (6R)-10-formyltetrahydrofolate = N-formyl-L-methionyl-tRNA(fMet) + (6S)-5,6,7,8-tetrahydrofolate + H(+). In terms of biological role, attaches a formyl group to the free amino group of methionyl-tRNA(fMet). The formyl group appears to play a dual role in the initiator identity of N-formylmethionyl-tRNA by promoting its recognition by IF2 and preventing the misappropriation of this tRNA by the elongation apparatus. The sequence is that of Methionyl-tRNA formyltransferase from Dehalococcoides mccartyi (strain ATCC BAA-2100 / JCM 16839 / KCTC 5957 / BAV1).